The chain runs to 61 residues: Small ribosomal subunit protein uS14 (61 aa).

The Zn(2+) site is built by Cys24, Cys27, Cys40, and Cys43.

It belongs to the universal ribosomal protein uS14 family. Zinc-binding uS14 subfamily. In terms of assembly, part of the 30S ribosomal subunit. Contacts proteins S3 and S10. Requires Zn(2+) as cofactor.

In terms of biological role, binds 16S rRNA, required for the assembly of 30S particles and may also be responsible for determining the conformation of the 16S rRNA at the A site. In Campylobacter concisus (strain 13826), this protein is Small ribosomal subunit protein uS14.